The chain runs to 116 residues: Cysteine-rich venom protein Cau1 (116 aa).

The region spanning 4–42 (SYAVVGHYTQIVWYKSDRIGCAAAYCPSSVYNYFYVCQY) is the SCP domain. Cystine bridges form between C24-C40, C62-C69, C65-C74, C87-C105, and C96-C109. In terms of domain architecture, ShKT spans 78–111 (CRVEDEFINCKDMAESRDCQDNYMMTNCAAFCSC).

Belongs to the CRISP family. As to expression, expressed by the venom gland.

It is found in the secreted. Blocks contraction of smooth muscle elicited by high potassium-induced depolarization, but does not block caffeine-stimulated contraction. May target voltage-gated calcium channels on smooth muscle. This is Cysteine-rich venom protein Cau1 from Causus rhombeatus (Rhombic night adder).